Here is a 466-residue protein sequence, read N- to C-terminus: Clusterin-like protein 1 (466 aa).

The N-terminal stretch at 1 to 20 is a signal peptide; it reads MKPPLLVFIVCLLWLKDSHC. Positions 57–111 form a coiled coil; it reads KQMKIMMERKEKEHTNLMSTLKKCREEKQEALKLLNEVQEHLEEEERLCRESLAD. Intrachain disulfides connect cysteine 105-cysteine 333, cysteine 116-cysteine 325, cysteine 119-cysteine 322, cysteine 124-cysteine 315, and cysteine 131-cysteine 305. N-linked (GlcNAc...) asparagine glycosylation is found at asparagine 196, asparagine 257, asparagine 311, asparagine 351, asparagine 412, and asparagine 431.

Belongs to the clusterin family.

It is found in the secreted. This is Clusterin-like protein 1 (CLUL1) from Homo sapiens (Human).